A 240-amino-acid chain; its full sequence is Large ribosomal subunit protein uL1c (240 aa).

This sequence belongs to the universal ribosomal protein uL1 family. Part of the 50S ribosomal subunit.

The protein localises to the plastid. It localises to the chloroplast. Binds directly to 23S rRNA. Might be involved in E site tRNA release (Potential). The protein is Large ribosomal subunit protein uL1c (rpl1) of Cyanidium caldarium (Red alga).